An 85-amino-acid chain; its full sequence is Large ribosomal subunit protein bL31B (85 aa).

Belongs to the bacterial ribosomal protein bL31 family. Type B subfamily. In terms of assembly, part of the 50S ribosomal subunit.

This is Large ribosomal subunit protein bL31B from Pseudarthrobacter chlorophenolicus (strain ATCC 700700 / DSM 12829 / CIP 107037 / JCM 12360 / KCTC 9906 / NCIMB 13794 / A6) (Arthrobacter chlorophenolicus).